The sequence spans 876 residues: Valine--tRNA ligase (876 aa).

Positions 44-54 (PNVTGKLHLGH) match the 'HIGH' region motif. The short motif at 520 to 524 (KMSKS) is the 'KMSKS' region element. An ATP-binding site is contributed by K523. The stretch at 805–876 (LEGLIDMDKE…VKSRIEQLKA (72 aa)) forms a coiled coil.

Belongs to the class-I aminoacyl-tRNA synthetase family. ValS type 1 subfamily. Monomer.

It localises to the cytoplasm. It carries out the reaction tRNA(Val) + L-valine + ATP = L-valyl-tRNA(Val) + AMP + diphosphate. Catalyzes the attachment of valine to tRNA(Val). As ValRS can inadvertently accommodate and process structurally similar amino acids such as threonine, to avoid such errors, it has a 'posttransfer' editing activity that hydrolyzes mischarged Thr-tRNA(Val) in a tRNA-dependent manner. The protein is Valine--tRNA ligase of Staphylococcus epidermidis (strain ATCC 35984 / DSM 28319 / BCRC 17069 / CCUG 31568 / BM 3577 / RP62A).